We begin with the raw amino-acid sequence, 114 residues long: UPF0060 membrane protein GDI3492/Gdia_2889 (114 aa).

The next 4 helical transmembrane spans lie at 8 to 28, 35 to 55, 64 to 84, and 92 to 112; these read FAVYAAAALCEIGGCYAWWCW, AWVLLPGMASLALFGWLLTLV, FAAYGGIYIVGAIVWLRLVEG, and AAGVAICLAGAAIILSAGRGA.

This sequence belongs to the UPF0060 family.

The protein resides in the cell inner membrane. The chain is UPF0060 membrane protein GDI3492/Gdia_2889 from Gluconacetobacter diazotrophicus (strain ATCC 49037 / DSM 5601 / CCUG 37298 / CIP 103539 / LMG 7603 / PAl5).